A 245-amino-acid polypeptide reads, in one-letter code: Small ribosomal subunit protein uS2 (245 aa).

It belongs to the universal ribosomal protein uS2 family.

The chain is Small ribosomal subunit protein uS2 from Pseudomonas entomophila (strain L48).